The sequence spans 58 residues: UPF0434 protein Swoo_1821 (58 aa).

Belongs to the UPF0434 family.

The chain is UPF0434 protein Swoo_1821 from Shewanella woodyi (strain ATCC 51908 / MS32).